Reading from the N-terminus, the 339-residue chain is MNALNAAMTVIGAGSYGTALAITLARNGHHVVLWGHDPKHIATLQHDRCNAAFLPDVPFPDTLHLESDLATALAASRDILVVVPSHVFGQVLRQIKPLMRSDARLVWATKGLEAETGRLLQDVAREALGDDIPLAVISGPTFAKELAAGLPTAISLAATDPQFAEDLQRLLHCGKSFRVYINPDFIGVQLGGAVKNVIAIGAGMSDGIGFGANARTALITRGLVEMSRLGAALGADPETFMGMAGLGDLVLTCTDNQSRNRRFGMMLGQGMDVQSAQDKIGQVVEGYRNTKEVRVLAQRLGVEMPITEEIYQVLYCGKIAREAALTLLGRARKDERSSN.

Residues Ser-15, Tyr-16, His-36, and Lys-110 each coordinate NADPH. Residues Lys-110, Gly-139, and Thr-141 each contribute to the sn-glycerol 3-phosphate site. Ala-143 contributes to the NADPH binding site. Positions 195, 248, 258, 259, and 260 each coordinate sn-glycerol 3-phosphate. Lys-195 serves as the catalytic Proton acceptor. Arg-259 contributes to the NADPH binding site. The NADPH site is built by Val-283 and Glu-285.

The protein belongs to the NAD-dependent glycerol-3-phosphate dehydrogenase family.

The protein localises to the cytoplasm. It catalyses the reaction sn-glycerol 3-phosphate + NAD(+) = dihydroxyacetone phosphate + NADH + H(+). The enzyme catalyses sn-glycerol 3-phosphate + NADP(+) = dihydroxyacetone phosphate + NADPH + H(+). Its pathway is membrane lipid metabolism; glycerophospholipid metabolism. Its function is as follows. Catalyzes the reduction of the glycolytic intermediate dihydroxyacetone phosphate (DHAP) to sn-glycerol 3-phosphate (G3P), the key precursor for phospholipid synthesis. The sequence is that of Glycerol-3-phosphate dehydrogenase [NAD(P)+] from Klebsiella pneumoniae subsp. pneumoniae (strain ATCC 700721 / MGH 78578).